We begin with the raw amino-acid sequence, 237 residues long: Listeriolysin regulatory protein (237 aa).

The 76-residue stretch at 137–212 (NGKLGSICGQ…NSCFYVQNLD (76 aa)) folds into the HTH crp-type domain.

In terms of biological role, positively regulates expression of listeriolysin, of 1-phosphadidylinositol phosphodiesterase (PI-PLC) and other virulence factors. This chain is Listeriolysin regulatory protein (prfA), found in Listeria monocytogenes serovar 1/2a (strain ATCC BAA-679 / EGD-e).